Here is a 427-residue protein sequence, read N- to C-terminus: MAKGFKLKELLSHQKEIEKAEKLENDLKKKKSQELKKEEPTIVTASNLKKLEKKEKKADVKKEVAADTEEYQSQALSKKEKRKLKKELKKMQEQDATEAQKHMSGDEDESGDDREEEEEEEEEEEGRLDLEKLAKSDSESEDDSESENDSEEDEDVVAKEESEEKEEQEEEQDVPLSDVEFDSDADVVPHHKLTVNNTKAMKHALERVQLPWKKHSFQEHQSVTSETNTDEHIKDIYDDTERELAFYKQSLDAVLVARDELKRLKVPFKRPLDYFAEMVKSDEHMDKIKGKLIEEASDKKAREEARRQRQLKKFGKQVQNATLQKRQLEKRETLEKIKSLKNKRKHNEIDHSEFNVGVEEEVEGKRFDRGRPNGKRAAKNAKYGQGGMKRFKRKNDATSSADVSGFSSRKMKGKTNRPGKSRRARRF.

2 stretches are compositionally biased toward basic and acidic residues: residues 29–40 and 49–65; these read KKKSQELKKEEP and KKLE…KEVA. The interval 29-190 is disordered; it reads KKKSQELKKE…FDSDADVVPH (162 aa). Residues 45–174 adopt a coiled-coil conformation; it reads ASNLKKLEKK…KEEQEEEQDV (130 aa). The span at 79–88 shows a compositional bias: basic residues; it reads KEKRKLKKEL. Basic and acidic residues predominate over residues 89–105; the sequence is KKMQEQDATEAQKHMSG. Position 104 is a phosphoserine (Ser104). The span at 106 to 126 shows a compositional bias: acidic residues; the sequence is DEDESGDDREEEEEEEEEEEG. Residues 127–138 show a composition bias toward basic and acidic residues; that stretch reads RLDLEKLAKSDS. 2 stretches are compositionally biased toward acidic residues: residues 139 to 155 and 163 to 185; these read ESED…EDED and EEKE…DSDA. Ser177 and Ser183 each carry phosphoserine. 2 coiled-coil regions span residues 234–265 and 291–348; these read KDIY…KRLK and KLIE…KHNE. The tract at residues 361-427 is disordered; it reads EVEGKRFDRG…PGKSRRARRF (67 aa). Positions 397 to 407 are enriched in polar residues; that stretch reads ATSSADVSGFS. The span at 409 to 427 shows a compositional bias: basic residues; sequence RKMKGKTNRPGKSRRARRF.

The protein belongs to the EBP2 family. As to quaternary structure, interacts with LOC1, NOP12, SIZ2, ULS1 and WSS1. In terms of processing, sumoylated.

Its subcellular location is the nucleus. It is found in the nucleolus. Its function is as follows. Required for the processing of the 27S pre-rRNA. Probably involved in the step of the processing of the 27 SA precursor into the 27 SB intermediate. The polypeptide is rRNA-processing protein EBP2 (EBP2) (Saccharomyces cerevisiae (strain ATCC 204508 / S288c) (Baker's yeast)).